A 353-amino-acid polypeptide reads, in one-letter code: Photosystem II protein D1 (353 aa).

Thr-2 is modified (N-acetylthreonine). A Phosphothreonine modification is found at Thr-2. A run of 3 helical transmembrane segments spans residues 29–46 (YIGWFGVLMIPTLLTATS), 118–133 (HFLLGVACYMGREWEL), and 142–156 (WIAVAYSAPVAAATA). Chlorophyll a is bound at residue His-118. Residue Tyr-126 coordinates pheophytin a. Positions 170 and 189 each coordinate [CaMn4O5] cluster. Residues 197 to 218 (FHMLGVAGVFGSSLFSAMHGSL) traverse the membrane as a helical segment. His-198 contributes to the chlorophyll a binding site. A quinone is bound by residues His-215 and 264-265 (SF). His-215 provides a ligand contact to Fe cation. His-272 contributes to the Fe cation binding site. Residues 274 to 288 (FLAAWPVVGIWFTAL) traverse the membrane as a helical segment. [CaMn4O5] cluster-binding residues include His-332, Glu-333, Asp-342, and Ala-344. The propeptide occupies 345-353 (AMEAPSVNG).

Belongs to the reaction center PufL/M/PsbA/D family. As to quaternary structure, PSII is composed of 1 copy each of membrane proteins PsbA, PsbB, PsbC, PsbD, PsbE, PsbF, PsbH, PsbI, PsbJ, PsbK, PsbL, PsbM, PsbT, PsbX, PsbY, PsbZ, Psb30/Ycf12, at least 3 peripheral proteins of the oxygen-evolving complex and a large number of cofactors. It forms dimeric complexes. It depends on The D1/D2 heterodimer binds P680, chlorophylls that are the primary electron donor of PSII, and subsequent electron acceptors. It shares a non-heme iron and each subunit binds pheophytin, quinone, additional chlorophylls, carotenoids and lipids. D1 provides most of the ligands for the Mn4-Ca-O5 cluster of the oxygen-evolving complex (OEC). There is also a Cl(-1) ion associated with D1 and D2, which is required for oxygen evolution. The PSII complex binds additional chlorophylls, carotenoids and specific lipids. as a cofactor. Post-translationally, tyr-161 forms a radical intermediate that is referred to as redox-active TyrZ, YZ or Y-Z. C-terminally processed by CTPA; processing is essential to allow assembly of the oxygen-evolving complex and thus photosynthetic growth.

The protein resides in the plastid. It localises to the chloroplast thylakoid membrane. It carries out the reaction 2 a plastoquinone + 4 hnu + 2 H2O = 2 a plastoquinol + O2. In terms of biological role, photosystem II (PSII) is a light-driven water:plastoquinone oxidoreductase that uses light energy to abstract electrons from H(2)O, generating O(2) and a proton gradient subsequently used for ATP formation. It consists of a core antenna complex that captures photons, and an electron transfer chain that converts photonic excitation into a charge separation. The D1/D2 (PsbA/PsbD) reaction center heterodimer binds P680, the primary electron donor of PSII as well as several subsequent electron acceptors. In Vigna unguiculata (Cowpea), this protein is Photosystem II protein D1.